Consider the following 465-residue polypeptide: RuvB-like helicase 2 (465 aa).

72–79 (GPPSTGKT) serves as a coordination point for ATP.

Belongs to the RuvB family. In terms of assembly, may form heterododecamers with RVB1. Component of the SWR1 chromatin remodeling complex, the INO80 chromatin remodeling complex, and of the R2TP complex. Interacts with dil1.

It localises to the nucleus. The enzyme catalyses ATP + H2O = ADP + phosphate + H(+). Functionally, DNA helicase which participates in several chromatin remodeling complexes, including the SWR1 and the INO80 complexes. The SWR1 complex mediates the ATP-dependent exchange of histone H2A for the H2A variant HZT1 leading to transcriptional regulation of selected genes by chromatin remodeling. The INO80 complex remodels chromatin by shifting nucleosomes and is involved in DNA repair. Also involved in pre-rRNA processing. The sequence is that of RuvB-like helicase 2 (rvb2) from Schizosaccharomyces pombe (strain 972 / ATCC 24843) (Fission yeast).